Reading from the N-terminus, the 83-residue chain is Putative membrane protein insertion efficiency factor (83 aa).

It belongs to the UPF0161 family.

The protein localises to the cell inner membrane. Its function is as follows. Could be involved in insertion of integral membrane proteins into the membrane. The polypeptide is Putative membrane protein insertion efficiency factor (Pelagibacter ubique (strain HTCC1062)).